We begin with the raw amino-acid sequence, 38 residues long: Mating hormone A-factor 2 (38 aa).

Over residues 1–12 the composition is skewed to polar residues; the sequence is MQPITTASTQAT. Positions 1–20 are disordered; sequence MQPITTASTQATQKDKSSEK. A propeptide spanning residues 1–23 is cleaved from the precursor; that stretch reads MQPITTASTQATQKDKSSEKKDN. Cysteine 35 carries the cysteine methyl ester modification. Cysteine 35 is lipidated: S-farnesyl cysteine. The propeptide at 36-38 is removed in mature form; sequence VIA.

It localises to the cell membrane. Functionally, the active factor is excreted into the culture medium by haploid cells of the A mating type and acts on cells of the opposite mating type (type alpha). It mediates the conjugation process between the two types by inhibiting the initiation of DNA synthesis in type alpha cells and synchronizing them with type A. This Saccharomyces cerevisiae (strain ATCC 204508 / S288c) (Baker's yeast) protein is Mating hormone A-factor 2 (MFA2).